A 331-amino-acid chain; its full sequence is Vitamin B12 import system permease protein BtuC (331 aa).

Transmembrane regions (helical) follow at residues 18–38, 64–84, 91–111, 114–134, 149–169, 194–214, 243–263, 277–297, and 305–325; these read WLFGLTLLLLVTLLISLCAGE, LAVLLVGAALALSGAIMQALF, PGLLGISNGAGVGLIAAVLLG, VLPGWALGLCAIFGALLITFI, LLAGVALGIICSALMTWAVYF, LWLMIALLPVLCWVCLQSQPL, GWMVGVSVALAGAIGFIGLVI, VLLPACMMAGASALLGADIIA, and ELPIGVVTATLGAPVFIWLLL.

This sequence belongs to the binding-protein-dependent transport system permease family. FecCD subfamily. The complex is composed of two ATP-binding proteins (BtuD), two transmembrane proteins (BtuC) and a solute-binding protein (BtuF).

The protein resides in the cell inner membrane. Functionally, part of the ABC transporter complex BtuCDF involved in vitamin B12 import. Involved in the translocation of the substrate across the membrane. This is Vitamin B12 import system permease protein BtuC from Klebsiella pneumoniae subsp. pneumoniae (strain ATCC 700721 / MGH 78578).